The following is a 449-amino-acid chain: Phosphoglucosamine mutase (449 aa).

The active-site Phosphoserine intermediate is Ser101. Mg(2+) contacts are provided by Ser101, Asp243, Asp245, and Asp247. The residue at position 101 (Ser101) is a Phosphoserine.

Belongs to the phosphohexose mutase family. Mg(2+) is required as a cofactor. In terms of processing, activated by phosphorylation.

The catalysed reaction is alpha-D-glucosamine 1-phosphate = D-glucosamine 6-phosphate. In terms of biological role, catalyzes the conversion of glucosamine-6-phosphate to glucosamine-1-phosphate. This Syntrophus aciditrophicus (strain SB) protein is Phosphoglucosamine mutase.